The chain runs to 145 residues: Large ribosomal subunit protein uL13 (145 aa).

It belongs to the universal ribosomal protein uL13 family. In terms of assembly, part of the 50S ribosomal subunit.

Functionally, this protein is one of the early assembly proteins of the 50S ribosomal subunit, although it is not seen to bind rRNA by itself. It is important during the early stages of 50S assembly. The sequence is that of Large ribosomal subunit protein uL13 from Geobacillus sp. (strain WCH70).